The following is a 269-amino-acid chain: Tryptophan synthase alpha chain (269 aa).

Active-site proton acceptor residues include Glu-50 and Asp-61.

It belongs to the TrpA family. As to quaternary structure, tetramer of two alpha and two beta chains.

The catalysed reaction is (1S,2R)-1-C-(indol-3-yl)glycerol 3-phosphate + L-serine = D-glyceraldehyde 3-phosphate + L-tryptophan + H2O. The protein operates within amino-acid biosynthesis; L-tryptophan biosynthesis; L-tryptophan from chorismate: step 5/5. In terms of biological role, the alpha subunit is responsible for the aldol cleavage of indoleglycerol phosphate to indole and glyceraldehyde 3-phosphate. The protein is Tryptophan synthase alpha chain of Buchnera aphidicola subsp. Baizongia pistaciae (strain Bp).